Here is a 344-residue protein sequence, read N- to C-terminus: Dihydroorotate dehydrogenase (quinone) (344 aa).

Residues 65-69 and Thr89 each bind FMN; that span reads AGFDK. Lys69 serves as a coordination point for substrate. 114–118 is a substrate binding site; it reads NRMGF. FMN-binding residues include Asn145 and Asn178. Asn178 is a substrate binding site. The active-site Nucleophile is Ser181. Asn183 is a substrate binding site. 2 residues coordinate FMN: Lys215 and Thr243. Position 244-245 (244-245) interacts with substrate; sequence NT. Residues Gly269, Gly298, and 319-320 each bind FMN; that span reads YT.

Belongs to the dihydroorotate dehydrogenase family. Type 2 subfamily. As to quaternary structure, monomer. FMN serves as cofactor.

It localises to the cell membrane. It catalyses the reaction (S)-dihydroorotate + a quinone = orotate + a quinol. The protein operates within pyrimidine metabolism; UMP biosynthesis via de novo pathway; orotate from (S)-dihydroorotate (quinone route): step 1/1. Its function is as follows. Catalyzes the conversion of dihydroorotate to orotate with quinone as electron acceptor. The protein is Dihydroorotate dehydrogenase (quinone) of Clavibacter sepedonicus (Clavibacter michiganensis subsp. sepedonicus).